Consider the following 568-residue polypeptide: Glucose-6-phosphate isomerase, cytosolic 1 (568 aa).

Catalysis depends on E360, which acts as the Proton donor. Active-site residues include H391 and K516.

This sequence belongs to the GPI family. In terms of assembly, homodimer.

It localises to the cytoplasm. The enzyme catalyses alpha-D-glucose 6-phosphate = beta-D-fructose 6-phosphate. It functions in the pathway carbohydrate degradation; glycolysis; D-glyceraldehyde 3-phosphate and glycerone phosphate from D-glucose: step 2/4. This Clarkia williamsonii protein is Glucose-6-phosphate isomerase, cytosolic 1 (PGIC1).